Consider the following 252-residue polypeptide: Trans-aconitate 2-methyltransferase (252 aa).

This sequence belongs to the methyltransferase superfamily. Tam family.

Its subcellular location is the cytoplasm. It catalyses the reaction trans-aconitate + S-adenosyl-L-methionine = (E)-3-(methoxycarbonyl)pent-2-enedioate + S-adenosyl-L-homocysteine. Functionally, catalyzes the S-adenosylmethionine monomethyl esterification of trans-aconitate. The protein is Trans-aconitate 2-methyltransferase of Escherichia coli (strain UTI89 / UPEC).